The chain runs to 110 residues: uncharacterized protein (110 aa).

To M.jannaschii MJ0123 and MJ1213.

This is an uncharacterized protein from Aquifex aeolicus (strain VF5).